The primary structure comprises 234 residues: DNA repair protein RecO (234 aa).

This sequence belongs to the RecO family.

Involved in DNA repair and RecF pathway recombination. The chain is DNA repair protein RecO from Idiomarina loihiensis (strain ATCC BAA-735 / DSM 15497 / L2-TR).